Here is a 279-residue protein sequence, read N- to C-terminus: NADH dehydrogenase [ubiquinone] iron-sulfur protein 3, mitochondrial (279 aa).

The transit peptide at 1 to 27 directs the protein to the mitochondrion; that stretch reads MISRTLLKRSLPTVQFLRPFTRSSIRR. Positions 249–279 are disordered; the sequence is EPVGEGKDFTPESFKLPTPEPEPEKESDEKK. Basic and acidic residues predominate over residues 270–279; that stretch reads EPEKESDEKK.

The protein belongs to the complex I 30 kDa subunit family. Core subunit of respiratory chain NADH dehydrogenase (Complex I).

The protein resides in the mitochondrion inner membrane. It carries out the reaction a ubiquinone + NADH + 5 H(+)(in) = a ubiquinol + NAD(+) + 4 H(+)(out). Core subunit of the mitochondrial membrane respiratory chain NADH dehydrogenase (Complex I) which catalyzes electron transfer from NADH through the respiratory chain, using ubiquinone as an electron acceptor. Plays a role in cell wall integrity and is involved in osmotic and oxidative resistance, yeast to hypha transition and the ability to damage and invade oral epithelial cells. This Candida albicans (strain SC5314 / ATCC MYA-2876) (Yeast) protein is NADH dehydrogenase [ubiquinone] iron-sulfur protein 3, mitochondrial (ALI1).